We begin with the raw amino-acid sequence, 1374 residues long: MKVSDRRKFEKANFDEFESALNNKNDLVHCPSITLFESIPTEVRSFYEDEKSGLIKVVKFRTGAMDRKRSFEKIVVSVMVGKNVQKFLTFVEDEPDFQGGPIPSKYLIPKKINLMVYTLFQVHTLKFNRKDYDTLSLFYLNRGYYNELSFRVLERCHEIASARPNDSSTMRTFTDFVSGAPIVRSLQKSTIRRYGYNLAPHMFLLLHVDELSIFSAYQASLPGEKKVDTERLKRDLCPRKPIEIKYFSQICNDMMNKKDRLGDVLATAQRIRRRYNKNGSSEPRLKTLDGLTSERWIQWLGLESDYHCSFSSTRNAEDVVAGEAASSDHDQKISRVTRKRPREPKSTNDILVAGQKLFGSSFEFRDLHQLRLCHEIYMADTPSVAVQAPPGYGKTELFHLPLIALASKGDVKYVSFLFVPYTVLLANCMIRLGRCGCLNVAPVRNFIEEGCDGVTDLYVGIYDDLASTNFTDRIAAWENIVECTFRTNNVKLGYLIVDEFHNFETEVYRQSQFGGITNLDFDAFEKAIFLSGTAPEAVADAALQRIGLTGLAKKSMDINELKRSEDLSRGLSSYPTRMFNLIKEKSEVPLGHVHKIWKKVESQPEEALKLLLALFEIEPESKAIVVASTTNEVEELACSWRKYFRVVWIHGKLGAAEKVSRTKEFVTDGSMRVLIGTKLVTEGIDIKQLMMVIMLDNRLNIIELIQGVGRLRDGGLCYLLSRKNSWAARNRKGELPPIKEGCITEQVREFYGLESKKGKKGQHVGCCGSRTDLSADTVELIERMDRLAEKQATASMSIVALPSSFQESNSSDRCRKYCSSDEDSNTCIHGSANASTNATTNSSTNATTTASTNVRTSATTTASINVRTSATTTESTNSSTNATTTASTNVRTSATTTASINVRTSATTTESTNSNTSATTTESTDSNTSATTTESTDSNTSATTTASTNSSTNATTTASTNSSTNATTTESTNASAKEDANKDGNAEDNRFHPVTDINKESYKRKGSQMVLLERKKLKAQFPNTSENMNVLQFLGFRSDEIKHLFLYGIDIYFCPEGVFTQYGLCKGCQKMFGLCVCWAGQKVSYRRMAWEALAVERMLRNDEEYKEYLEDIEPYHGDPVGYLKFFSVKRGEIYSQIQRNYAWYLAITRRRETISVLDSTRGKQGSQVFRMSGRQIKELYYKVWSNLRESKTEVLQYFLNWDEKKCREEWEAKDDTVFVEALEKVGVFQRLRSMTSAGLQGPQYVKLQFSRHHRQLRSRYELSLGMHLRDQLALGVTPSKVPHWTAFLSMLIGLFYNKTFRQKLEYLLEQISEVWLLPHWVDLANVEVLAADNTRVPLYMLMVAVHKELDSDDVPDGRFDIILLCRDSSREVGE.

The disordered stretch occupies residues 321–345; sequence AGEAASSDHDQKISRVTRKRPREPK. Positions 375–552 constitute a Helicase ATP-binding domain; the sequence is EIYMADTPSV…LQRIGLTGLA (178 aa). 388–395 contributes to the ATP binding site; sequence APPGYGKT. A DEAH box motif is present at residues 498–501; the sequence is DEFH. One can recognise a Helicase C-terminal domain in the interval 609–758; the sequence is KLLLALFEIE…EFYGLESKKG (150 aa). Residues 832 to 975 show a composition bias toward low complexity; that stretch reads ANASTNATTN…ATTTESTNAS (144 aa). The disordered stretch occupies residues 832-999; the sequence is ANASTNATTN…RFHPVTDINK (168 aa). Residues 976 to 999 show a composition bias toward basic and acidic residues; the sequence is AKEDANKDGNAEDNRFHPVTDINK.

This sequence belongs to the helicase family. Yeast subtelomeric Y' repeat subfamily.

Functionally, catalyzes DNA unwinding and is involved in telomerase-independent telomere maintenance. In Saccharomyces cerevisiae (strain ATCC 204508 / S288c) (Baker's yeast), this protein is Y' element ATP-dependent helicase YLL066C.